We begin with the raw amino-acid sequence, 650 residues long: 1-deoxy-D-xylulose-5-phosphate synthase (650 aa).

Residues His73 and 114-116 (SHA) each bind thiamine diphosphate. A Mg(2+)-binding site is contributed by Asp145. Residues 146 to 147 (GA), Asn174, Tyr285, and Glu367 contribute to the thiamine diphosphate site. Residue Asn174 coordinates Mg(2+). The segment at 631–650 (MGDEVGADESNQTPAGGGQA) is disordered.

The protein belongs to the transketolase family. DXPS subfamily. As to quaternary structure, homodimer. The cofactor is Mg(2+). Thiamine diphosphate is required as a cofactor.

The enzyme catalyses D-glyceraldehyde 3-phosphate + pyruvate + H(+) = 1-deoxy-D-xylulose 5-phosphate + CO2. The protein operates within metabolic intermediate biosynthesis; 1-deoxy-D-xylulose 5-phosphate biosynthesis; 1-deoxy-D-xylulose 5-phosphate from D-glyceraldehyde 3-phosphate and pyruvate: step 1/1. Its function is as follows. Catalyzes the acyloin condensation reaction between C atoms 2 and 3 of pyruvate and glyceraldehyde 3-phosphate to yield 1-deoxy-D-xylulose-5-phosphate (DXP). The sequence is that of 1-deoxy-D-xylulose-5-phosphate synthase from Parafrankia sp. (strain EAN1pec).